Consider the following 193-residue polypeptide: Deoxycytidylate deaminase (193 aa).

The CMP/dCMP-type deaminase domain occupies 1 to 171 (MKASTVLQIA…DILRNAGIEV (171 aa)). Positions 19, 49, 94, 102, and 104 each coordinate Zn(2+). The active-site Proton donor is Glu106. Residues Cys132 and Cys135 each contribute to the Zn(2+) site. Tyr153 contributes to the substrate binding site.

This sequence belongs to the cytidine and deoxycytidylate deaminase family. As to quaternary structure, homohexamer. The cofactor is Zn(2+).

It catalyses the reaction dCMP + H2O + H(+) = dUMP + NH4(+). Allosteric enzyme whose activity is greatly influenced by the end products of its metabolic pathway, dCTP and dTTP. Its function is as follows. Supplies the nucleotide substrate for thymidylate synthetase. The sequence is that of Deoxycytidylate deaminase (CD) from Escherichia coli (Bacteriophage T4).